A 61-amino-acid chain; its full sequence is Overexpressed in colon carcinoma 1 protein homolog (61 aa).

A compositionally biased stretch (polar residues) spans 1–13; it reads MGCGNSTAASTTP. Residues 1-61 are disordered; sequence MGCGNSTAAS…AGQTASTHKE (61 aa). The span at 18–34 shows a compositional bias: basic and acidic residues; the sequence is SAKDVQDDSSMDEEKRR. Positions 48–61 are enriched in polar residues; it reads TNETAGQTASTHKE.

This sequence belongs to the OCC1 family.

This is Overexpressed in colon carcinoma 1 protein homolog (si:dkey-261e22.4) from Danio rerio (Zebrafish).